The following is a 556-amino-acid chain: Formate--tetrahydrofolate ligase (556 aa).

65–72 (TPAGEGKS) contributes to the ATP binding site.

The protein belongs to the formate--tetrahydrofolate ligase family.

It catalyses the reaction (6S)-5,6,7,8-tetrahydrofolate + formate + ATP = (6R)-10-formyltetrahydrofolate + ADP + phosphate. It participates in one-carbon metabolism; tetrahydrofolate interconversion. This chain is Formate--tetrahydrofolate ligase, found in Streptococcus equi subsp. equi (strain 4047).